Consider the following 109-residue polypeptide: uncharacterized protein (109 aa).

The protein resides in the mitochondrion. This is an uncharacterized protein from Marchantia polymorpha (Common liverwort).